We begin with the raw amino-acid sequence, 525 residues long: Glutamate synthase large subunit-like protein YerD (525 aa).

Residues 4–24 (IIIALIAFIIGIIAIPIVLFA) traverse the membrane as a helical segment.

This sequence belongs to the glutamate synthase family.

It localises to the cell membrane. The chain is Glutamate synthase large subunit-like protein YerD (yerD) from Bacillus subtilis (strain 168).